The following is a 60-amino-acid chain: Large ribosomal subunit protein bL32 (60 aa).

Belongs to the bacterial ribosomal protein bL32 family.

This is Large ribosomal subunit protein bL32 from Clostridium perfringens (strain ATCC 13124 / DSM 756 / JCM 1290 / NCIMB 6125 / NCTC 8237 / Type A).